Consider the following 194-residue polypeptide: MKVILLERVEGTGVLGDVVTVKDGFARNFLLPRHKALRANSANLKSFEVQRAEIEARNVKNREAAGKSGEGLDGKQYVMIRQAGESGQLYGSVAGRDVADAIKAEGGKVDRSMIVLDKPIKTLGVHEVKVKLHAEVTVTVTLNIARSQDEADRQARGENVVAAQFEEDRAAEAEAASDMAAGGAGSFEGDHYES.

A disordered region spans residues 167-194 (EDRAAEAEAASDMAAGGAGSFEGDHYES).

This sequence belongs to the bacterial ribosomal protein bL9 family.

Functionally, binds to the 23S rRNA. The chain is Large ribosomal subunit protein bL9 from Caulobacter sp. (strain K31).